We begin with the raw amino-acid sequence, 124 residues long: Holo-[acyl-carrier-protein] synthase (124 aa).

2 residues coordinate Mg(2+): aspartate 8 and glutamate 56.

This sequence belongs to the P-Pant transferase superfamily. AcpS family. Mg(2+) is required as a cofactor.

Its subcellular location is the cytoplasm. The catalysed reaction is apo-[ACP] + CoA = holo-[ACP] + adenosine 3',5'-bisphosphate + H(+). Its function is as follows. Transfers the 4'-phosphopantetheine moiety from coenzyme A to a Ser of acyl-carrier-protein. The sequence is that of Holo-[acyl-carrier-protein] synthase from Clostridium acetobutylicum (strain ATCC 824 / DSM 792 / JCM 1419 / IAM 19013 / LMG 5710 / NBRC 13948 / NRRL B-527 / VKM B-1787 / 2291 / W).